Here is a 46-residue protein sequence, read N- to C-terminus: Large ribosomal subunit protein bL36 (46 aa).

The protein belongs to the bacterial ribosomal protein bL36 family.

The protein is Large ribosomal subunit protein bL36 of Salmonella agona (strain SL483).